Reading from the N-terminus, the 348-residue chain is GTPase Obg (348 aa).

Residues 1-159 (MKFLDQARIY…MTLWLRLKLI (159 aa)) enclose the Obg domain. The region spanning 160 to 327 (ADAGLVGLPN…TLQSLLAAID (168 aa)) is the OBG-type G domain. Residues 166–173 (GLPNAGKS), 191–195 (FTTLH), 212–215 (DIPG), 279–282 (SKID), and 308–310 (SAA) each bind GTP. Mg(2+)-binding residues include Ser-173 and Thr-193.

This sequence belongs to the TRAFAC class OBG-HflX-like GTPase superfamily. OBG GTPase family. Monomer. The cofactor is Mg(2+).

Its subcellular location is the cytoplasm. Its function is as follows. An essential GTPase which binds GTP, GDP and possibly (p)ppGpp with moderate affinity, with high nucleotide exchange rates and a fairly low GTP hydrolysis rate. Plays a role in control of the cell cycle, stress response, ribosome biogenesis and in those bacteria that undergo differentiation, in morphogenesis control. The polypeptide is GTPase Obg (Beijerinckia indica subsp. indica (strain ATCC 9039 / DSM 1715 / NCIMB 8712)).